We begin with the raw amino-acid sequence, 449 residues long: Aspartate aminotransferase 3, chloroplastic (449 aa).

The N-terminal 43 residues, 1–43, are a transit peptide targeting the chloroplast; it reads MKTTHFSSSSSSDRRIGALLRHLNSGSDSDNLSSLYASPTSGG. Residues glycine 81, tryptophan 178, and asparagine 231 each contribute to the L-aspartate site. Residue lysine 295 is modified to N6-(pyridoxal phosphate)lysine. Arginine 423 lines the L-aspartate pocket.

It belongs to the class-I pyridoxal-phosphate-dependent aminotransferase family. Homodimer. The cofactor is pyridoxal 5'-phosphate. Expressed in roots, cauline leaves, flowers, hypocotyl epidermis and root hair cells.

The protein resides in the plastid. The protein localises to the chloroplast. It carries out the reaction L-aspartate + 2-oxoglutarate = oxaloacetate + L-glutamate. In terms of biological role, amino acid aminotransferase important for the metabolism of amino acids and Krebs-cycle related organic acids. No activity with D-Asp or D-Ala as amino donors. In plants, it is involved in nitrogen metabolism and in aspects of carbon and energy metabolism. The protein is Aspartate aminotransferase 3, chloroplastic (ASP3) of Arabidopsis thaliana (Mouse-ear cress).